We begin with the raw amino-acid sequence, 96 residues long: Small ribosomal subunit protein bS6 (96 aa).

The protein belongs to the bacterial ribosomal protein bS6 family.

Binds together with bS18 to 16S ribosomal RNA. The sequence is that of Small ribosomal subunit protein bS6 from Bacillus mycoides (strain KBAB4) (Bacillus weihenstephanensis).